We begin with the raw amino-acid sequence, 884 residues long: DNA mismatch repair protein MutS (884 aa).

Position 601 to 608 (601 to 608 (GPNMSGKS)) interacts with ATP. A disordered region spans residues 826–845 (ESQLSFFGGEQSSKKQDKPL).

This sequence belongs to the DNA mismatch repair MutS family.

Its function is as follows. This protein is involved in the repair of mismatches in DNA. It is possible that it carries out the mismatch recognition step. This protein has a weak ATPase activity. The protein is DNA mismatch repair protein MutS of Bacillus cereus (strain ATCC 14579 / DSM 31 / CCUG 7414 / JCM 2152 / NBRC 15305 / NCIMB 9373 / NCTC 2599 / NRRL B-3711).